Reading from the N-terminus, the 264-residue chain is Apolipoprotein A-I (264 aa).

Positions 1-18 (MKAVLLVVAALFLAGSQA) are cleaved as a signal peptide. Tandem repeats lie at residues 67–88 (LRLS…ADFG) and 89–110 (LATQ…QIVS). The segment at 67 to 264 (LRLSDNWDTL…DQASKQLAAQ (198 aa)) is 10 X approximate tandem repeats. Residues 111–121 (EDLQDVKHKVQ) form a 3; half-length repeat. Tandem repeats lie at residues 122–143 (PYLE…EKVR), 144–165 (PLGI…EKLT), 166–187 (PLGE…TQLA), 188–207 (PFSE…LKDS), and 208–229 (ATLA…EKAK). The residue at position 193 (M193) is a Methionine sulfoxide. Residues 230-240 (PALEDLRQGLL) form a 9; half-length repeat. The stretch at 241–264 (PVLENLKASILSSIDQASKQLAAQ) is repeat 10.

The protein belongs to the apolipoprotein A1/A4/E family. In terms of assembly, homodimer. Interacts with APOA1BP and CLU. Component of a sperm activating protein complex (SPAP), consisting of APOA1, an immunoglobulin heavy chain, an immunoglobulin light chain and albumin. Interacts with NDRG1. Interacts with SCGB3A2. Interacts with NAXE and YJEFN3. In terms of processing, glycosylated. Post-translationally, palmitoylated. Phosphorylation sites are present in the extracellular medium.

The protein resides in the secreted. In terms of biological role, participates in the reverse transport of cholesterol from tissues to the liver for excretion by promoting cholesterol efflux from tissues and by acting as a cofactor for the lecithin cholesterol acyltransferase (LCAT). As part of the SPAP complex, activates spermatozoa motility. The polypeptide is Apolipoprotein A-I (APOA1) (Cavia porcellus (Guinea pig)).